The primary structure comprises 660 residues: 1-deoxy-D-xylulose-5-phosphate synthase (660 aa).

Thiamine diphosphate-binding positions include His86 and 127-129 (AHS). Residue Asp164 participates in Mg(2+) binding. Residues 165–166 (GS), Asn196, Tyr306, and Glu388 contribute to the thiamine diphosphate site. Residue Asn196 participates in Mg(2+) binding.

This sequence belongs to the transketolase family. DXPS subfamily. Homodimer. Requires Mg(2+) as cofactor. Thiamine diphosphate is required as a cofactor.

The enzyme catalyses D-glyceraldehyde 3-phosphate + pyruvate + H(+) = 1-deoxy-D-xylulose 5-phosphate + CO2. It functions in the pathway metabolic intermediate biosynthesis; 1-deoxy-D-xylulose 5-phosphate biosynthesis; 1-deoxy-D-xylulose 5-phosphate from D-glyceraldehyde 3-phosphate and pyruvate: step 1/1. Its function is as follows. Catalyzes the acyloin condensation reaction between C atoms 2 and 3 of pyruvate and glyceraldehyde 3-phosphate to yield 1-deoxy-D-xylulose-5-phosphate (DXP). The chain is 1-deoxy-D-xylulose-5-phosphate synthase from Gluconobacter oxydans (strain 621H) (Gluconobacter suboxydans).